Reading from the N-terminus, the 80-residue chain is uncharacterized protein (80 aa).

The next 2 membrane-spanning stretches (helical) occupy residues 15 to 35 (ALGL…LSGV) and 45 to 65 (WFEM…WAMV).

It to H.influenzae HI_0974B.

It localises to the cell membrane. This is an uncharacterized protein from Escherichia coli (strain K12).